Reading from the N-terminus, the 580-residue chain is YTH domain-containing family protein 2 (580 aa).

The interval 1 to 45 (MSASSLLEQRPKGQGNKVQNGSVHQKDGLNDDDFEPYLSPQARPN) is disordered. At Ser-2 the chain carries N-acetylserine. Ser-2, Ser-4, Ser-5, Ser-22, Ser-39, and Ser-196 each carry phosphoserine. The segment at 2 to 385 (SASSLLEQRP…QAGSGSTPSE (384 aa)) is localization to mRNA processing bodies (P-bodies). The interval 247 to 388 (AKQQPKLKTK…SGSTPSEPHP (142 aa)) is disordered. Positions 291–317 (ALVQNIGQQPTQGSPQPVGQQANNSPP) are enriched in polar residues. Positions 338–350 (AQLSVQQQAAQPT) are enriched in low complexity. The residue at position 360 (Ser-360) is a Phosphoserine. Residues 360 to 372 (SGFGHNGVDGNGV) are compositionally biased toward gly residues. Positions 373–384 (GQTQAGSGSTPS) are enriched in polar residues. Residues 386-580 (PHPVLEKLRS…VKKERQGRGK (195 aa)) are interaction with m6A-containing mRNAs. Ser-395 carries the post-translational modification Phosphoserine. The YTH domain maps to 411-545 (GRVFIIKSYS…EKAKQVLKII (135 aa)). Residues 417-419 (KSY), Asp-423, 433-434 (WC), Asn-463, Trp-487, and Trp-492 contribute to the RNA site.

The protein belongs to the YTHDF family. YTHDF2 subfamily. Interacts with CNOT1; interaction is direct and promotes recruitment of the CCR4-NOT complex. Interacts with YTHDF3. Interacts with RIDA/HRSP12; interaction leads to recruitment of the ribonuclease P/MRP complex. Ubiquitinated by the SCF(SKP2) complex, leading to its degradation.

Its subcellular location is the cytoplasm. It is found in the cytosol. The protein localises to the P-body. It localises to the stress granule. The protein resides in the nucleus. Its function is as follows. Specifically recognizes and binds N6-methyladenosine (m6A)-containing RNAs, and regulates their stability. M6A is a modification present at internal sites of mRNAs and some non-coding RNAs and plays a role in mRNA stability and processing. Acts as a regulator of mRNA stability by promoting degradation of m6A-containing mRNAs via interaction with the CCR4-NOT and ribonuclease P/MRP complexes, depending on the context. The YTHDF paralogs (YTHDF1, YTHDF2 and YTHDF3) share m6A-containing mRNAs targets and act redundantly to mediate mRNA degradation and cellular differentiation. M6A-containing mRNAs containing a binding site for RIDA/HRSP12 (5'-GGUUC-3') are preferentially degraded by endoribonucleolytic cleavage: cooperative binding of RIDA/HRSP12 and YTHDF2 to transcripts leads to recruitment of the ribonuclease P/MRP complex. Other m6A-containing mRNAs undergo deadenylation via direct interaction between YTHDF2 and CNOT1, leading to recruitment of the CCR4-NOT and subsequent deadenylation of m6A-containing mRNAs. Required maternally to regulate oocyte maturation: probably acts by binding to m6A-containing mRNAs, thereby regulating maternal transcript dosage during oocyte maturation, which is essential for the competence of oocytes to sustain early zygotic development. Also required during spermatogenesis: regulates spermagonial adhesion by promoting degradation of m6A-containing transcripts coding for matrix metallopeptidases. Also involved in hematopoietic stem cells specification by binding to m6A-containing mRNAs, leading to promote their degradation. Also acts as a regulator of neural development by promoting m6A-dependent degradation of neural development-related mRNA targets. Inhibits neural specification of induced pluripotent stem cells by binding to methylated neural-specific mRNAs and promoting their degradation, thereby restraining neural differentiation. Regulates circadian regulation of hepatic lipid metabolism: acts by promoting m6A-dependent degradation of PPARA transcripts. Regulates the innate immune response to infection by inhibiting the type I interferon response: acts by binding to m6A-containing IFNB transcripts and promoting their degradation. May also act as a promoter of cap-independent mRNA translation following heat shock stress: upon stress, relocalizes to the nucleus and specifically binds mRNAs with some m6A methylation mark at their 5'-UTR, protecting demethylation of mRNAs by FTO, thereby promoting cap-independent mRNA translation. Regulates mitotic entry by promoting the phase-specific m6A-dependent degradation of WEE1 transcripts. Promotes formation of phase-separated membraneless compartments, such as P-bodies or stress granules, by undergoing liquid-liquid phase separation upon binding to mRNAs containing multiple m6A-modified residues: polymethylated mRNAs act as a multivalent scaffold for the binding of YTHDF proteins, juxtaposing their disordered regions and thereby leading to phase separation. The resulting mRNA-YTHDF complexes then partition into different endogenous phase-separated membraneless compartments, such as P-bodies, stress granules or neuronal RNA granules. May also recognize and bind RNAs modified by C5-methylcytosine (m5C) and act as a regulator of rRNA processing. The polypeptide is YTH domain-containing family protein 2 (Bos taurus (Bovine)).